The primary structure comprises 251 residues: Aspartate/glutamate leucyltransferase (251 aa).

Belongs to the R-transferase family. Bpt subfamily.

The protein localises to the cytoplasm. The catalysed reaction is N-terminal L-glutamyl-[protein] + L-leucyl-tRNA(Leu) = N-terminal L-leucyl-L-glutamyl-[protein] + tRNA(Leu) + H(+). The enzyme catalyses N-terminal L-aspartyl-[protein] + L-leucyl-tRNA(Leu) = N-terminal L-leucyl-L-aspartyl-[protein] + tRNA(Leu) + H(+). Its function is as follows. Functions in the N-end rule pathway of protein degradation where it conjugates Leu from its aminoacyl-tRNA to the N-termini of proteins containing an N-terminal aspartate or glutamate. The sequence is that of Aspartate/glutamate leucyltransferase from Xanthomonas oryzae pv. oryzae (strain KACC10331 / KXO85).